The sequence spans 257 residues: A-factor type gamma-butyrolactone 1'-reductase (1S-forming) (257 aa).

Tyr161 (proton acceptor) is an active-site residue.

The protein belongs to the short-chain dehydrogenases/reductases (SDR) family. In terms of assembly, homodimer.

The enzyme catalyses a (3R,4R)-3-[(1S)-1-hydroxyalkyl]-4-(hydroxymethyl)oxolan-2-one + NADP(+) = a (3R,4R)-3-alkanoyl-4-(hydroxymethyl)oxolan-2-one + NADPH + H(+). Involved in the biosynthesis of virginiae butanolide (VB), which regulates the production of antibiotic virginiamycin. Catalyzes the reduction of 6-dehydro-VB-A to VB-A, the last catalytic step in VB biosynthesis. In vitro, can use various synthetic A-factor-type analogs. The sequence is that of A-factor type gamma-butyrolactone 1'-reductase (1S-forming) from Streptomyces virginiae (Streptomyces cinnamonensis).